The sequence spans 355 residues: S-adenosylmethionine:tRNA ribosyltransferase-isomerase (355 aa).

This sequence belongs to the QueA family. As to quaternary structure, monomer.

It localises to the cytoplasm. The enzyme catalyses 7-aminomethyl-7-carbaguanosine(34) in tRNA + S-adenosyl-L-methionine = epoxyqueuosine(34) in tRNA + adenine + L-methionine + 2 H(+). It participates in tRNA modification; tRNA-queuosine biosynthesis. In terms of biological role, transfers and isomerizes the ribose moiety from AdoMet to the 7-aminomethyl group of 7-deazaguanine (preQ1-tRNA) to give epoxyqueuosine (oQ-tRNA). The polypeptide is S-adenosylmethionine:tRNA ribosyltransferase-isomerase (Pectobacterium atrosepticum (strain SCRI 1043 / ATCC BAA-672) (Erwinia carotovora subsp. atroseptica)).